The sequence spans 217 residues: Adenylate kinase (217 aa).

Position 10–15 (10–15) interacts with ATP; it reads GSGKGT. Positions 30–59 are NMP; it reads STGDLLRAAVAAGSELGKQAKAAMDAGELV. AMP-binding positions include threonine 31, arginine 36, 57-59, 85-88, and glutamine 92; these read ELV and GFPR. The interval 126–164 is LID; sequence GRRTCQACGAIYNIYFSPPEVDHRCDKCNSDQLVQRSDD. Arginine 127 contributes to the ATP binding site. The Zn(2+) site is built by cysteine 130 and cysteine 133. Residue 136-137 participates in ATP binding; that stretch reads IY. Zn(2+) contacts are provided by cysteine 150 and cysteine 153. The AMP site is built by arginine 161 and arginine 172. Aspartate 200 is a binding site for ATP.

It belongs to the adenylate kinase family. Monomer.

The protein resides in the cytoplasm. It carries out the reaction AMP + ATP = 2 ADP. It functions in the pathway purine metabolism; AMP biosynthesis via salvage pathway; AMP from ADP: step 1/1. In terms of biological role, catalyzes the reversible transfer of the terminal phosphate group between ATP and AMP. Plays an important role in cellular energy homeostasis and in adenine nucleotide metabolism. This chain is Adenylate kinase, found in Nitrosococcus oceani (strain ATCC 19707 / BCRC 17464 / JCM 30415 / NCIMB 11848 / C-107).